The following is a 299-amino-acid chain: Oxygen-dependent coproporphyrinogen-III oxidase (299 aa).

Serine 92 contributes to the substrate binding site. Residues histidine 96 and histidine 106 each coordinate a divalent metal cation. Histidine 106 acts as the Proton donor in catalysis. 108–110 (NVR) lines the substrate pocket. Residues histidine 145 and histidine 175 each coordinate a divalent metal cation. Residues 240-275 (YVEFNLVWDRGTLFGLQTGGRTESILMSMPPLVRWE) are important for dimerization. 258-260 (GGR) is a substrate binding site.

Belongs to the aerobic coproporphyrinogen-III oxidase family. Homodimer. The cofactor is a divalent metal cation.

The protein resides in the cytoplasm. It carries out the reaction coproporphyrinogen III + O2 + 2 H(+) = protoporphyrinogen IX + 2 CO2 + 2 H2O. It functions in the pathway porphyrin-containing compound metabolism; protoporphyrin-IX biosynthesis; protoporphyrinogen-IX from coproporphyrinogen-III (O2 route): step 1/1. Functionally, involved in the heme biosynthesis. Catalyzes the aerobic oxidative decarboxylation of propionate groups of rings A and B of coproporphyrinogen-III to yield the vinyl groups in protoporphyrinogen-IX. The chain is Oxygen-dependent coproporphyrinogen-III oxidase from Shigella boydii serotype 18 (strain CDC 3083-94 / BS512).